We begin with the raw amino-acid sequence, 234 residues long: Large ribosomal subunit protein uL1 (234 aa).

This sequence belongs to the universal ribosomal protein uL1 family. In terms of assembly, part of the 50S ribosomal subunit.

Functionally, binds directly to 23S rRNA. The L1 stalk is quite mobile in the ribosome, and is involved in E site tRNA release. Protein L1 is also a translational repressor protein, it controls the translation of the L11 operon by binding to its mRNA. In Escherichia coli O127:H6 (strain E2348/69 / EPEC), this protein is Large ribosomal subunit protein uL1.